A 384-amino-acid chain; its full sequence is Succinyl-diaminopimelate desuccinylase (384 aa).

His73 contributes to the Zn(2+) binding site. Residue Asp75 is part of the active site. Asp106 contributes to the Zn(2+) binding site. The Proton acceptor role is filled by Glu140. Positions 141, 169, and 358 each coordinate Zn(2+).

This sequence belongs to the peptidase M20A family. DapE subfamily. Homodimer. Zn(2+) is required as a cofactor. Co(2+) serves as cofactor.

It catalyses the reaction N-succinyl-(2S,6S)-2,6-diaminopimelate + H2O = (2S,6S)-2,6-diaminopimelate + succinate. Its pathway is amino-acid biosynthesis; L-lysine biosynthesis via DAP pathway; LL-2,6-diaminopimelate from (S)-tetrahydrodipicolinate (succinylase route): step 3/3. Its function is as follows. Catalyzes the hydrolysis of N-succinyl-L,L-diaminopimelic acid (SDAP), forming succinate and LL-2,6-diaminopimelate (DAP), an intermediate involved in the bacterial biosynthesis of lysine and meso-diaminopimelic acid, an essential component of bacterial cell walls. The sequence is that of Succinyl-diaminopimelate desuccinylase from Pelagibacter ubique (strain HTCC1062).